Reading from the N-terminus, the 257-residue chain is Na(+)-translocating NADH-quinone reductase subunit C (257 aa).

A helical transmembrane segment spans residues L13 to L33. Position 224 is an FMN phosphoryl threonine (T224).

The protein belongs to the NqrC family. Composed of six subunits; NqrA, NqrB, NqrC, NqrD, NqrE and NqrF. FMN is required as a cofactor.

Its subcellular location is the cell inner membrane. It catalyses the reaction a ubiquinone + n Na(+)(in) + NADH + H(+) = a ubiquinol + n Na(+)(out) + NAD(+). Functionally, NQR complex catalyzes the reduction of ubiquinone-1 to ubiquinol by two successive reactions, coupled with the transport of Na(+) ions from the cytoplasm to the periplasm. NqrA to NqrE are probably involved in the second step, the conversion of ubisemiquinone to ubiquinol. In Haemophilus ducreyi (strain 35000HP / ATCC 700724), this protein is Na(+)-translocating NADH-quinone reductase subunit C.